Here is a 591-residue protein sequence, read N- to C-terminus: L-fucose isomerase (591 aa).

Active-site proton acceptor residues include Glu337 and Asp361. Mn(2+) is bound by residues Glu337, Asp361, and His528.

This sequence belongs to the L-fucose isomerase family. Homohexamer. The cofactor is Mn(2+).

Its subcellular location is the cytoplasm. The enzyme catalyses L-fucose = L-fuculose. The protein operates within carbohydrate degradation; L-fucose degradation; L-lactaldehyde and glycerone phosphate from L-fucose: step 1/3. Its function is as follows. Converts the aldose L-fucose into the corresponding ketose L-fuculose. In Salmonella heidelberg (strain SL476), this protein is L-fucose isomerase.